We begin with the raw amino-acid sequence, 407 residues long: Protein ZNF365 (407 aa).

S16 bears the Phosphoserine mark. The C2H2-type; degenerate zinc-finger motif lies at 26-51 (FRCPRCGDHTRFRSLSSLRAHLEFSH). The residue at position 138 (S138) is a Phosphoserine. Residues 169–296 (VEAVDRTIEK…KQLEYYQSQQ (128 aa)) are a coiled coil. T175 bears the Phosphothreonine mark. Residues 347-392 (LKKAKDDRASMQPAKAIHEQAESSRDLCRPPKKGELLGFGRKGNIR) form a disordered region. The span at 362–381 (AIHEQAESSRDLCRPPKKGE) shows a compositional bias: basic and acidic residues. A Phosphoserine modification is found at S369.

In terms of assembly, homodimers. Interacts with NDE1 and NDEL1. Interacts with DISC1. Interacts with PARP1. Interacts with MCRS1.

The protein localises to the cytoplasm. It localises to the cytoskeleton. Its subcellular location is the microtubule organizing center. The protein resides in the centrosome. Its function is as follows. Involved in the regulation of neurogenesis. Negatively regulates neurite outgrowth. Involved in the morphogenesis of basket cells in the somatosensory cortex during embryogenesis. Involved in the positive regulation of oligodendrocyte differentiation during postnatal growth. Involved in dendritic arborization, morphogenesis of spine density dendrite, and establishment of postsynaptic dendrite density in cortical pyramidal neurons. Involved in homologous recombination (HR) repair pathway. Required for proper resolution of DNA double-strand breaks (DSBs) by HR. Is required for recovery of stalled replication forks, and directly contributes to genomic stability. Interacts with PARP1 and mediates MRE11-dependent DNA end resection during replication fork recovery. Contributes to genomic stability by preventing telomere dysfunction. In Pongo abelii (Sumatran orangutan), this protein is Protein ZNF365 (ZNF365).